A 252-amino-acid chain; its full sequence is Oil body-associated protein 2A (252 aa).

The disordered stretch occupies residues 1–31; the sequence is MASSDGKPLPTPASVGGGGGSSTAPPGQPTT. Low complexity predominate over residues 22-31; it reads STAPPGQPTT.

This sequence belongs to the OBAP family.

This Zea mays (Maize) protein is Oil body-associated protein 2A.